Here is a 218-residue protein sequence, read N- to C-terminus: Oxaloacetate decarboxylase, mitochondrial (218 aa).

The N-terminal 18 residues, 1–18 (MNKFWETGRKIVAVGRNY), are a transit peptide targeting the mitochondrion. 3 residues coordinate Mg(2+): Glu63, Glu65, and Asp94.

This sequence belongs to the FAH family. Homodimer. Mg(2+) serves as cofactor. Mn(2+) is required as a cofactor.

It is found in the mitochondrion. The protein resides in the cytoplasm. Its subcellular location is the cytosol. The catalysed reaction is a 3-acylpyruvate + H2O = a carboxylate + pyruvate + H(+). It carries out the reaction acetylpyruvate + H2O = acetate + pyruvate + H(+). It catalyses the reaction 3-fumarylpyruvate + H2O = fumarate + pyruvate + H(+). The enzyme catalyses oxaloacetate + H(+) = pyruvate + CO2. Functionally, mitochondrial protein that acts as an oxaloacetate decarboxylase (ODx), catalyzing the decarboxylation of oxaloacetate (OAA) to pyruvate and CO(2), and as such is likely a regulatory enzyme in the TCA cycle. Also displays acylpyruvase activity, being able to hydrolyze acetylpyruvate and fumarylpyruvate in vitro. This chain is Oxaloacetate decarboxylase, mitochondrial (fahd1), found in Dictyostelium discoideum (Social amoeba).